The chain runs to 670 residues: Oligopeptidase PepF (670 aa).

His-456 contacts Zn(2+). Residue Glu-457 is part of the active site. 2 residues coordinate Zn(2+): His-460 and His-463.

The protein belongs to the peptidase M3B family. Requires Zn(2+) as cofactor.

The protein resides in the cytoplasm. Overexpression results in inhibition of sporulation initiation. This sporulation deficiency could be the result of hydrolysis by PepF of the PhrA peptide, a phosphatase regulator. Thus, overexpression of PepF appears to act at the level of the phosphorelay, most likely through modulation of the negative role played by phosphatases. Overexpression of PepF also affects the activity of the competence and sporulation stimulating factor PhrC. The protein is Oligopeptidase PepF of Bacillus subtilis (strain 168).